Consider the following 70-residue polypeptide: Large ribosomal subunit protein bL31c (70 aa).

Belongs to the bacterial ribosomal protein bL31 family. Type A subfamily. In terms of assembly, part of the 50S ribosomal subunit.

It localises to the plastid. The protein resides in the chloroplast. Functionally, binds the 23S rRNA. This Porphyra purpurea (Red seaweed) protein is Large ribosomal subunit protein bL31c.